A 515-amino-acid polypeptide reads, in one-letter code: E3 ubiquitin-protein ligase RNF38 (515 aa).

Residues 57-71 (DSPSPKRQRLSHSVF) carry the Bipartite nuclear localization signal 1 motif. Residues 73–141 (YTSASPAPSP…LSRHNSISQD (69 aa)) form a disordered region. Residues 89 to 104 (MTSNRQPPSVRPSQHH) show a composition bias toward polar residues. The Bipartite nuclear localization signal 2 motif lies at 115–131 (RNRRSPPVRRQRGRRDR). Positions 115-134 (RNRRSPPVRRQRGRRDRLSR) are enriched in basic residues. The RING-type zinc-finger motif lies at 463-504 (CVVCMCDFESRQLLRVLPCNHEFHAKCVDKWLKANRTCPICR).

Widely expressed with highest levels in testis.

The protein localises to the nucleus. It catalyses the reaction S-ubiquitinyl-[E2 ubiquitin-conjugating enzyme]-L-cysteine + [acceptor protein]-L-lysine = [E2 ubiquitin-conjugating enzyme]-L-cysteine + N(6)-ubiquitinyl-[acceptor protein]-L-lysine.. The protein operates within protein modification; protein ubiquitination. Acts as an E3 ubiquitin-protein ligase able to ubiquitinate p53/TP53 which promotes its relocalization to discrete foci associated with PML nuclear bodies. Exhibits preference for UBE2D2 as a E2 enzyme. In Homo sapiens (Human), this protein is E3 ubiquitin-protein ligase RNF38.